Reading from the N-terminus, the 353-residue chain is uncharacterized protein (353 aa).

The Mn(2+) site is built by Asp-212, Asp-223, His-287, Glu-316, and Glu-330.

It belongs to the peptidase M24B family. Mn(2+) is required as a cofactor.

This is an uncharacterized protein from Bacillus subtilis (strain 168).